Here is a 369-residue protein sequence, read N- to C-terminus: Porphobilinogen deaminase, chloroplastic (369 aa).

The N-terminal 46 residues, 1–46 (MEMTLYSSSSFSLPSAPSNPSLSLFTSSFRFSSFKTSPFSKCRIRA), are a transit peptide targeting the chloroplast. Cys303 is modified (S-(dipyrrolylmethanemethyl)cysteine).

Belongs to the HMBS family. Dipyrromethane is required as a cofactor.

The protein localises to the plastid. Its subcellular location is the chloroplast. It carries out the reaction 4 porphobilinogen + H2O = hydroxymethylbilane + 4 NH4(+). It participates in porphyrin-containing compound metabolism; protoporphyrin-IX biosynthesis; coproporphyrinogen-III from 5-aminolevulinate: step 2/4. Its pathway is porphyrin-containing compound metabolism; chlorophyll biosynthesis. In terms of biological role, tetrapolymerization of the monopyrrole PBG into the hydroxymethylbilane pre-uroporphyrinogen in several discrete steps. This is Porphobilinogen deaminase, chloroplastic (HEMC) from Pisum sativum (Garden pea).